A 75-amino-acid chain; its full sequence is MSLSSWKNLMNPVSESPICMIDLSFLGNSRIVIDEILFKVSEIRLVTVLPPTTLGNKQTLIGVFSAEIISERIEQ.

This is an uncharacterized protein from Homo sapiens (Human).